A 120-amino-acid polypeptide reads, in one-letter code: Large ribosomal subunit protein uL24 (120 aa).

The interval 1-26 (MSKQPDKQRKSQRRAPLHERHKQVRA) is disordered. Over residues 10 to 24 (KSQRRAPLHERHKQV) the composition is skewed to basic residues.

It belongs to the universal ribosomal protein uL24 family. Part of the 50S ribosomal subunit. Interacts weakly with protein L4.

Its function is as follows. One of two assembly initiator proteins, it binds directly to the 5'-end of the 23S rRNA, where it nucleates assembly of the 50S subunit. Functionally, stabilizes the tertiary rRNA structure within the 23S rRNA domain (domain I) to which it binds. Located at the polypeptide exit tunnel on the outside of the subunit. In Haloarcula marismortui (strain ATCC 43049 / DSM 3752 / JCM 8966 / VKM B-1809) (Halobacterium marismortui), this protein is Large ribosomal subunit protein uL24 (rpl24).